Reading from the N-terminus, the 95-residue chain is Integration host factor subunit beta (95 aa).

A disordered region spans residues 56 to 76 (RAPRTGRNPKTGTSVDLDGKY).

Belongs to the bacterial histone-like protein family. Heterodimer of an alpha and a beta chain.

Functionally, this protein is one of the two subunits of integration host factor, a specific DNA-binding protein that functions in genetic recombination as well as in transcriptional and translational control. The chain is Integration host factor subunit beta from Shewanella sediminis (strain HAW-EB3).